The primary structure comprises 182 residues: Ribulose bisphosphate carboxylase small subunit, chloroplastic 4 (182 aa).

A chloroplast-targeting transit peptide spans 1 to 41 (MAATMMNKTVVLSKGCTKPSAVPKVSINRKGFLNTAMNKKR).

Belongs to the RuBisCO small chain family. In terms of assembly, heterohexadecamer of 8 large and 8 small subunits.

It localises to the plastid. The protein resides in the chloroplast. Functionally, ruBisCO catalyzes two reactions: the carboxylation of D-ribulose 1,5-bisphosphate, the primary event in carbon dioxide fixation, as well as the oxidative fragmentation of the pentose substrate. Both reactions occur simultaneously and in competition at the same active site. Although the small subunit is not catalytic it is essential for maximal activity. The sequence is that of Ribulose bisphosphate carboxylase small subunit, chloroplastic 4 from Acetabularia peniculus (Green alga).